The following is a 355-amino-acid chain: Guanine nucleotide-binding protein G(i) subunit alpha-2 (355 aa).

Gly2 is lipidated: N-myristoyl glycine. A lipid anchor (S-palmitoyl cysteine) is attached at Cys3. The 324-residue stretch at Arg32 to Phe355 folds into the G-alpha domain. The segment at Lys35–Thr48 is G1 motif. Residues Gly40–Ser47, Leu176–Thr182, Asp201–Gln205, Asn270–Asp273, and Ala327 each bind GTP. Mg(2+) is bound at residue Ser47. Positions Asp174–Thr182 are G2 motif. Arg179 is modified (ADP-ribosylarginine; by cholera toxin). Thr182 serves as a coordination point for Mg(2+). The G3 motif stretch occupies residues Phe197 to Arg206. Gln205 is modified (deamidated glutamine; by Photorhabdus PAU_02230). The tract at residues Ile266–Asp273 is G4 motif. Positions Thr325–Thr330 are G5 motif. ADP-ribosylcysteine; by pertussis toxin is present on Cys352.

The protein belongs to the G-alpha family. G(i/o/t/z) subfamily. In terms of assembly, g proteins are composed of 3 units; alpha, beta and gamma. The alpha chain contains the guanine nucleotide binding site. In this context, interacts with GNB2. Interacts with GPSM1. Interacts with RGS12 and RGS14. Interacts with UNC5B. Interacts (inactive GDP-bound form) with NUCB1 (via GBA motif); the interaction leads to activation of GNAI3. Interacts (inactive GDP-bound form) with CCDC88C/DAPLE (via GBA motif). Interacts (inactive GDP-bound form) with CCDC8A/GIV (via GBA motif). Interacts with CXCR1 and CXCR2. (Microbial infection) Deamidated at Gln-205 by Photorhabdus asymbiotica toxin PAU_02230, blocking GTP hydrolysis of heterotrimeric GNAQ or GNA11 and G-alphai (GNAI1, GNAI2 or GNAI3) proteins, thereby activating RhoA.

The protein localises to the cytoplasm. The protein resides in the cytoskeleton. It is found in the microtubule organizing center. Its subcellular location is the centrosome. It localises to the cell membrane. The protein localises to the membrane. Its function is as follows. Guanine nucleotide-binding proteins (G proteins) are involved as modulators or transducers in various transmembrane signaling systems. The G(i) proteins are involved in hormonal regulation of adenylate cyclase: they inhibit the cyclase in response to beta-adrenergic stimuli. May play a role in cell division. Functionally, regulates the cell surface density of dopamine receptors DRD2 by sequestrating them as an intracellular pool. This Homo sapiens (Human) protein is Guanine nucleotide-binding protein G(i) subunit alpha-2 (GNAI2).